The sequence spans 492 residues: Glutamate--cysteine ligase A, chloroplastic (492 aa).

The cysteines at positions 156 and 376 are disulfide-linked.

Belongs to the carboxylate-amine ligase family. Glutamate--cysteine ligase type 2 subfamily. In terms of assembly, homodimer or monomer when oxidized or reduced, respectively. In terms of processing, the Cys-156-Cys-376 disulfide bridge is known to modulate the enzyme activity according to the redox status. The oxidized form constitutes the active enzyme.

It localises to the plastid. It is found in the chloroplast. It catalyses the reaction L-cysteine + L-glutamate + ATP = gamma-L-glutamyl-L-cysteine + ADP + phosphate + H(+). Its pathway is sulfur metabolism; glutathione biosynthesis; glutathione from L-cysteine and L-glutamate: step 1/2. In Oryza sativa subsp. indica (Rice), this protein is Glutamate--cysteine ligase A, chloroplastic (GSH1-1).